Consider the following 257-residue polypeptide: Transcription factor GHD7 (257 aa).

Position 68 is a phosphoserine; by CK1 (serine 68). One can recognise a CCT domain in the interval 190–232; sequence REAKLMRYKEKRKKRCYEKQIRYASRKAYAEMRPRVRGRFAKE. The Nuclear localization signal signature appears at 198–204; sequence KEKRKKR. A disordered region spans residues 226 to 245; it reads RGRFAKEPDQEAVAPPSTYV.

In terms of assembly, interacts with HD16/EL1. Phosphorylated at Ser-68 by HD16/EL1, a casein kinase 1. Expressed in the apical meristem, developing leaves, leaf sheaths of young seedling, root meristem, epidermal layer of developing stems and branch-primordia of developing panicles.

It localises to the nucleus. In terms of biological role, probable transcription factor involved in the regulation of flowering time under long day (LD) conditions. Plays a major role as repressor of flowering. Controls flowering time by negatively regulating the expression of EHD1 and HD3A. This chain is Transcription factor GHD7, found in Oryza sativa subsp. japonica (Rice).